We begin with the raw amino-acid sequence, 383 residues long: Queuine tRNA-ribosyltransferase (383 aa).

Aspartate 90 acts as the Proton acceptor in catalysis. Substrate contacts are provided by residues 90-94, aspartate 144, glutamine 193, and glycine 227; that span reads DSGGF. An RNA binding region spans residues 258-264; it reads GVGTPED. Aspartate 277 functions as the Nucleophile in the catalytic mechanism. The interval 282–286 is RNA binding; important for wobble base 34 recognition; sequence TRNAR. The Zn(2+) site is built by cysteine 315, cysteine 317, cysteine 320, and histidine 346.

The protein belongs to the queuine tRNA-ribosyltransferase family. As to quaternary structure, homodimer. Within each dimer, one monomer is responsible for RNA recognition and catalysis, while the other monomer binds to the replacement base PreQ1. It depends on Zn(2+) as a cofactor.

The enzyme catalyses 7-aminomethyl-7-carbaguanine + guanosine(34) in tRNA = 7-aminomethyl-7-carbaguanosine(34) in tRNA + guanine. It functions in the pathway tRNA modification; tRNA-queuosine biosynthesis. In terms of biological role, catalyzes the base-exchange of a guanine (G) residue with the queuine precursor 7-aminomethyl-7-deazaguanine (PreQ1) at position 34 (anticodon wobble position) in tRNAs with GU(N) anticodons (tRNA-Asp, -Asn, -His and -Tyr). Catalysis occurs through a double-displacement mechanism. The nucleophile active site attacks the C1' of nucleotide 34 to detach the guanine base from the RNA, forming a covalent enzyme-RNA intermediate. The proton acceptor active site deprotonates the incoming PreQ1, allowing a nucleophilic attack on the C1' of the ribose to form the product. After dissociation, two additional enzymatic reactions on the tRNA convert PreQ1 to queuine (Q), resulting in the hypermodified nucleoside queuosine (7-(((4,5-cis-dihydroxy-2-cyclopenten-1-yl)amino)methyl)-7-deazaguanosine). In Ralstonia pickettii (strain 12J), this protein is Queuine tRNA-ribosyltransferase.